The chain runs to 154 residues: Protein FAM162A (154 aa).

A required for proapoptotic activity region spans residues 76–102 (RFKKEDEIPETVSLEMLDAAKNKMRVK). A helical transmembrane segment spans residues 103-120 (ISYLMIALTVVGCIFMVI).

This sequence belongs to the UPF0389 family. As to quaternary structure, interacts with HSP90AB1; HSP90AB1 is essential for FAM162A mitochondrial localization and pro-apoptotic activity. Interacts with VDAC2; the interaction is probably involved in inducing mitochondrial permeability transition.

It is found in the mitochondrion membrane. Proposed to be involved in regulation of apoptosis; the exact mechanism may differ between cell types/tissues. May be involved in hypoxia-induced cell death of transformed cells implicating cytochrome C release and caspase activation (such as CASP9) and inducing mitochondrial permeability transition. May be involved in hypoxia-induced cell death of neuronal cells probably by promoting release of AIFM1 from mitochondria to cytoplasm and its translocation to the nucleus; however, the involvement of caspases has been reported conflictingly. The protein is Protein FAM162A (FAM162A) of Homo sapiens (Human).